Here is a 265-residue protein sequence, read N- to C-terminus: Tryptophan synthase alpha chain (265 aa).

Active-site proton acceptor residues include glutamate 49 and aspartate 60.

It belongs to the TrpA family. In terms of assembly, tetramer of two alpha and two beta chains.

It carries out the reaction (1S,2R)-1-C-(indol-3-yl)glycerol 3-phosphate + L-serine = D-glyceraldehyde 3-phosphate + L-tryptophan + H2O. It functions in the pathway amino-acid biosynthesis; L-tryptophan biosynthesis; L-tryptophan from chorismate: step 5/5. Functionally, the alpha subunit is responsible for the aldol cleavage of indoleglycerol phosphate to indole and glyceraldehyde 3-phosphate. The sequence is that of Tryptophan synthase alpha chain from Paracoccus denitrificans (strain Pd 1222).